The chain runs to 98 residues: Putative defensin-like protein 239 (98 aa).

The N-terminal stretch at Met1–Gly23 is a signal peptide. 4 disulfides stabilise this stretch: Cys29-Cys89, Cys39-Cys69, Cys47-Cys86, and Cys67-Cys88.

The protein belongs to the DEFL family.

It localises to the secreted. The chain is Putative defensin-like protein 239 (SCRL17) from Arabidopsis thaliana (Mouse-ear cress).